The primary structure comprises 698 residues: Elongation factor G (698 aa).

The region spanning A10–L285 is the tr-type G domain. GTP is bound by residues A19–T26, D83–H87, and N137–D140.

The protein belongs to the TRAFAC class translation factor GTPase superfamily. Classic translation factor GTPase family. EF-G/EF-2 subfamily.

Its subcellular location is the cytoplasm. Its function is as follows. Catalyzes the GTP-dependent ribosomal translocation step during translation elongation. During this step, the ribosome changes from the pre-translocational (PRE) to the post-translocational (POST) state as the newly formed A-site-bound peptidyl-tRNA and P-site-bound deacylated tRNA move to the P and E sites, respectively. Catalyzes the coordinated movement of the two tRNA molecules, the mRNA and conformational changes in the ribosome. This Frankia alni (strain DSM 45986 / CECT 9034 / ACN14a) protein is Elongation factor G.